An 86-amino-acid chain; its full sequence is Neuropeptide-like 2 (86 aa).

Residues 1–19 form the signal peptide; sequence MAKLAICILVFALFALALS. 2 propeptides span residues 20–34 and 45–86; these read ARVPREESNPAQEFL and IEKL…AAST.

As to expression, hemolymph (at protein level).

It localises to the secreted. This is Neuropeptide-like 2 (Nplp2) from Drosophila melanogaster (Fruit fly).